A 134-amino-acid chain; its full sequence is Replication enhancer protein (134 aa).

It belongs to the geminiviridae replication enhancer protein family. As to quaternary structure, homooligomer. Interacts with the replication-associated protein (REP). Interacts with host proliferating cell nuclear antigen (PCNA). Interacts with host retinoblastoma-related protein 1 (RBR1), and may thereby deregulate the host cell cycle. Oligomerization and interaction with PCNA are necessary for optimal replication enhancement.

In terms of biological role, increases viral DNA accumulation. Enhances infectivity and symptom expression. This Cynanchum acutum (Little mallow) protein is Replication enhancer protein.